The chain runs to 339 residues: Anthranilate phosphoribosyltransferase (339 aa).

5-phospho-alpha-D-ribose 1-diphosphate contacts are provided by residues glycine 79, glycine 82–aspartate 83, serine 87, asparagine 89–threonine 92, lysine 107–serine 115, and serine 119. Position 79 (glycine 79) interacts with anthranilate. Serine 91 serves as a coordination point for Mg(2+). Asparagine 110 lines the anthranilate pocket. Arginine 165 contributes to the anthranilate binding site. Mg(2+)-binding residues include aspartate 224 and glutamate 225.

This sequence belongs to the anthranilate phosphoribosyltransferase family. In terms of assembly, homodimer. Mg(2+) serves as cofactor.

It catalyses the reaction N-(5-phospho-beta-D-ribosyl)anthranilate + diphosphate = 5-phospho-alpha-D-ribose 1-diphosphate + anthranilate. It functions in the pathway amino-acid biosynthesis; L-tryptophan biosynthesis; L-tryptophan from chorismate: step 2/5. Catalyzes the transfer of the phosphoribosyl group of 5-phosphorylribose-1-pyrophosphate (PRPP) to anthranilate to yield N-(5'-phosphoribosyl)-anthranilate (PRA). In Listeria welshimeri serovar 6b (strain ATCC 35897 / DSM 20650 / CCUG 15529 / CIP 8149 / NCTC 11857 / SLCC 5334 / V8), this protein is Anthranilate phosphoribosyltransferase.